A 371-amino-acid polypeptide reads, in one-letter code: Protein maelstrom 1 (371 aa).

Positions 2–68 (AQNKPNAFMA…VLERESKTER (67 aa)) form a DNA-binding region, HMG box.

It belongs to the maelstrom family.

The protein localises to the cytoplasm. Its subcellular location is the nucleus. In terms of biological role, involved both in the piRNA and miRNA metabolic processes. As a component of the meiotic nuage, plays a central role during oogenesis by repressing transposable elements and preventing their mobilization, which is essential for the germline integrity. Repression of transposable elements is mediated via the piRNA metabolic process, which mediates the repression of transposable elements during meiosis by forming complexes composed of piRNAs and Piwi proteins and governs the repression of transposons. As a nuclear component, it is required for proper differentiation in the germline stem cell (GSC) lineage by repressing microRNA-7 (miR-7), thereby acting as an indirect regulator of bag-of-marbles (Bam). Acts by binding to the promoter of miR-7 gene and repressing its expression; miR-7 repression alleviates the Bam repression by miR-7, thereby allowing differentiation in the germline stem cell (GSC) lineage. In Drosophila pseudoobscura pseudoobscura (Fruit fly), this protein is Protein maelstrom 1 (mael1).